A 116-amino-acid chain; its full sequence is Small ribosomal subunit protein uS13 (116 aa).

Residues 92–116 are disordered; that stretch reads RRGLPVRGQNTKNNARTRKGAKRSR. Positions 106-116 are enriched in basic residues; sequence ARTRKGAKRSR.

It belongs to the universal ribosomal protein uS13 family. As to quaternary structure, part of the 30S ribosomal subunit. Forms a loose heterodimer with protein S19. Forms two bridges to the 50S subunit in the 70S ribosome.

Functionally, located at the top of the head of the 30S subunit, it contacts several helices of the 16S rRNA. In the 70S ribosome it contacts the 23S rRNA (bridge B1a) and protein L5 of the 50S subunit (bridge B1b), connecting the 2 subunits; these bridges are implicated in subunit movement. Contacts the tRNAs in the A and P-sites. In Lactobacillus delbrueckii subsp. bulgaricus (strain ATCC 11842 / DSM 20081 / BCRC 10696 / JCM 1002 / NBRC 13953 / NCIMB 11778 / NCTC 12712 / WDCM 00102 / Lb 14), this protein is Small ribosomal subunit protein uS13.